The primary structure comprises 194 residues: Adenylate kinase isoenzyme 1 (194 aa).

Methionine 1 bears the N-acetylmethionine mark. 18–23 is an ATP binding site; that stretch reads GSGKGT. Serine 38 is subject to Phosphoserine. The NMP stretch occupies residues 38–67; it reads STGDLLRAEVSSGSSRGKMLSSIMEKGELV. Residues threonine 39, arginine 44, 65–67, 94–97, and glutamine 101 each bind AMP; these read ELV and GYPR. Residues 131 to 141 are LID; that stretch reads KRGETSGRVDD. Residue arginine 132 coordinates ATP. AMP contacts are provided by arginine 138 and arginine 149. Position 177 (glycine 177) interacts with ATP.

It belongs to the adenylate kinase family. AK1 subfamily. In terms of assembly, monomer. Mg(2+) serves as cofactor.

It is found in the cytoplasm. The catalysed reaction is a ribonucleoside 5'-phosphate + ATP = a ribonucleoside 5'-diphosphate + ADP. It catalyses the reaction AMP + ATP = 2 ADP. It carries out the reaction dAMP + ATP = dADP + ADP. The enzyme catalyses dATP + AMP = dADP + ADP. The catalysed reaction is dAMP + dATP = 2 dADP. It catalyses the reaction a 2'-deoxyribonucleoside 5'-diphosphate + ATP = a 2'-deoxyribonucleoside 5'-triphosphate + ADP. It carries out the reaction a ribonucleoside 5'-diphosphate + ATP = a ribonucleoside 5'-triphosphate + ADP. The enzyme catalyses CDP + GTP = CTP + GDP. The catalysed reaction is GDP + ATP = GTP + ADP. It catalyses the reaction UDP + ATP = UTP + ADP. It carries out the reaction GTP + UDP = UTP + GDP. The enzyme catalyses dTDP + GTP = dTTP + GDP. The catalysed reaction is dCDP + GTP = dCTP + GDP. It catalyses the reaction dGDP + ATP = dGTP + ADP. It carries out the reaction dADP + GTP = dATP + GDP. The enzyme catalyses thiamine diphosphate + ADP = thiamine triphosphate + AMP. In terms of biological role, catalyzes the reversible transfer of the terminal phosphate group between ATP and AMP. Also displays broad nucleoside diphosphate kinase activity. Plays an important role in cellular energy homeostasis and in adenine nucleotide metabolism. Also catalyzes at a very low rate the synthesis of thiamine triphosphate (ThTP) from thiamine diphosphate (ThDP) and ADP. The polypeptide is Adenylate kinase isoenzyme 1 (Ak1) (Rattus norvegicus (Rat)).